A 129-amino-acid chain; its full sequence is GM1b/asialo-GM1 oligosaccharide-binding R-type lectin (129 aa).

Residues 21–23 (FYN), 26–28 (RKD), Phe-32, and 37–40 (YDDQ) each bind a carbohydrate.

In terms of assembly, homodimer. In terms of tissue distribution, highest expression in the outer part of the mantle rim. Highly expressed in gills, with a much lower expression in the digestive gland and posterior adductor muscle. Scarcely detectable in foot.

With respect to regulation, hemagglutination activity requires divalent cations such as Ca(2+). Hemagglutination activity is weakly inhibited by monosaccharides such as D-Gal (25 mM), D-GalNAc (25 mM) and D-Fuc (25 mM) and by disaccharides such as melibiose (25 mM) and lactose (25 mM). Hemagglutination activity is inhibited by bovine submaxillary mucin, but not by porcine stomach mucin or fetuin. Its function is as follows. Galbeta1-3GalNAcbeta1-4Galbeta1-4Glc oligosaccharide-binding lectin. Binds strongly to the oligosaccharides of ganglioside GM1b and to a lesser extent its precursor asialo-GM1. Binds weakly to asialo-GM2 oligosaccharide and to the glycan moiety of globo-series stage-specific embryonal antigen 4 (SSEA-4) hexaose. Binds galactose, N-acetylgalactose and lactose. Does not bind GM1. Does not bind to Gal-beta1,3-GalNAc (Thomsen-Friedenreich antigen), the oligosaccharide of GM1a ganglioside or SSEA-4 tetraose. Does not bind to N-glycans, O-glycans or glycosaminoglycans of glycoproteins. Does not bind Lewis glycans, derivatives of lactose or N-acetyllactosamine or blood group (ABH-type) oligosaccharides. Does not bind glucose. Has hemagglutination activity towards rabbit erythrocytes. Displays cytotoxic effects against various cultured cell lines including human breast (MCF-7), cervical (HeLa) and colon cancer (Caco2) cell lines, as well as dog kidney (MDCK) cell line that express asialo-GM1 oligosaccharide at their cell surface. Shows dose- and time-dependent activation of MKK3/6, ERK1/2 and p38 MAPK, as well as caspase-3/9 in HeLa cervical cancer cells. No cytotoxic effect on BT474 human breast cancer cell line. May be involved in recognition of glycans found on parasitic or symbiotic microorganisms. The sequence is that of GM1b/asialo-GM1 oligosaccharide-binding R-type lectin from Mytilisepta virgata (Purplish bifurcate mussel).